Reading from the N-terminus, the 258-residue chain is (7aS)-7a-methyl-1,5-dioxo-2,3,5,6,7,7a-hexahydro-1H-indene-carboxyl-CoA hydrolase (258 aa).

Belongs to the enoyl-CoA hydratase/isomerase family.

It carries out the reaction (7aS)-7a-methyl-1,5-dioxo-2,3,5,6,7,7a-hexahydro-1H-indene-carboxyl-CoA + H2O = (3E)-2-(2-carboxylatoethyl)-3-methyl-6-oxocyclohex-1-ene-1-carboxyl-CoA + H(+). It participates in steroid metabolism; cholesterol degradation. Functionally, involved in the final steps of cholesterol and steroid degradation. Catalyzes the hydrolytic ring D opening of (7aS)-7a-methyl-1,5-dioxo-2,3,5,6,7,7a-hexahydro-1H-indene-carboxyl-CoA (HIEC-CoA) to (3E)-2-(2-carboxylatoethyl)-3-methyl-6-oxocyclohex-1-ene-1-carboxyl-CoA (COCHEA-CoA). The polypeptide is (7aS)-7a-methyl-1,5-dioxo-2,3,5,6,7,7a-hexahydro-1H-indene-carboxyl-CoA hydrolase (Rhodococcus jostii (strain RHA1)).